The following is a 493-amino-acid chain: Transcript termination protein OPG145 (493 aa).

Residues 100 to 256 (MIKLKRPLYI…NSIINIAKLS (157 aa)) enclose the Helicase ATP-binding domain. Position 113–120 (113–120 (LACGFGKT)) interacts with ATP. The DESH box motif lies at 206–209 (DESH).

The protein belongs to the helicase family. Poxviruses subfamily. In terms of assembly, interacts with OPG087. Might be part of a transcription complex composed at least of OPG087, OPG110, and OPG145.

It is found in the virion. Functionally, DNA helicase which seems to act as a postreplicative transcription termination factor. Involved in ATP-dependent release of nascent RNA. Forms a stable complex with single-stranded DNA, and to a lesser extent RNA. This chain is Transcript termination protein OPG145 (OPG145), found in Variola virus (isolate Human/India/Ind3/1967) (VARV).